A 227-amino-acid polypeptide reads, in one-letter code: Probable methylthioribulose-1-phosphate dehydratase (227 aa).

Residue cysteine 87 coordinates substrate. Residues histidine 105 and histidine 107 each contribute to the Zn(2+) site. The Proton donor/acceptor role is filled by glutamate 129. Zn(2+) is bound at residue histidine 185.

Belongs to the aldolase class II family. MtnB subfamily. Requires Zn(2+) as cofactor.

It localises to the cytoplasm. It carries out the reaction 5-(methylsulfanyl)-D-ribulose 1-phosphate = 5-methylsulfanyl-2,3-dioxopentyl phosphate + H2O. Its pathway is amino-acid biosynthesis; L-methionine biosynthesis via salvage pathway; L-methionine from S-methyl-5-thio-alpha-D-ribose 1-phosphate: step 2/6. In terms of biological role, catalyzes the dehydration of methylthioribulose-1-phosphate (MTRu-1-P) into 2,3-diketo-5-methylthiopentyl-1-phosphate (DK-MTP-1-P). The sequence is that of Probable methylthioribulose-1-phosphate dehydratase from Drosophila erecta (Fruit fly).